Here is a 446-residue protein sequence, read N- to C-terminus: Peptide chain release factor 1, mitochondrial (446 aa).

A mitochondrion-targeting transit peptide spans 1–62; sequence MSHHLCIWLF…LLNKSWSRGC (62 aa). Residues 298–362 form a GGQ domain region; that stretch reads PKDLRVDTFR…LRARLYQQII (65 aa). A GGQ motif is present at residues 312–314; that stretch reads GGQ. Gln-314 is subject to N5-methylglutamine.

The protein belongs to the prokaryotic/mitochondrial release factor family. Post-translationally, methylation of glutamine in the GGQ triplet by HEMK1 is conserved from bacteria to mammals.

Its subcellular location is the mitochondrion. Functionally, mitochondrial peptide chain release factor that directs the termination of translation in response to the peptide chain non-canonical stop codons AGG and AGA. Non-canonical termination codons AGG and AGA are found at the end of MT-CO1/COX1 and MT-ND6/ND6 open reading frames, respectively. Recognizes non-canonical stop codons via a network of interactions between the codon, MTRF1 and the ribosomal RNA (rRNA): in contrast to other translation release factors, which identify the codon in the A-site via direct interactions of amino acid side chains with the bases, MTRF1 repositions the first 2 bases of the stop codon to use an intricate network of interactions that includes residues of the release factor, the rRNA of the small ribosomal subunit, as well as neighboring bases of the mRNA. This chain is Peptide chain release factor 1, mitochondrial, found in Mus musculus (Mouse).